The chain runs to 319 residues: Homoserine dehydrogenase (319 aa).

Phenylalanine 10, threonine 12, valine 13, arginine 40, lysine 57, serine 92, serine 93, serine 114, and lysine 116 together coordinate NADPH. NAD(+) is bound at residue valine 13. 2 residues coordinate NADP(+): valine 13 and arginine 40. Serine 92 is an NAD(+) binding site. Serine 92 contributes to the NADP(+) binding site. NADP(+) is bound by residues serine 114 and lysine 116. Positions 140, 143, 145, and 147 each coordinate Na(+). Glycine 197 and glutamate 200 together coordinate NADP(+). Residues glutamate 200 and aspartate 211 each coordinate L-homoserine. The active-site Proton donor is lysine 215. Glycine 296 contacts NADPH. Residue glycine 296 coordinates NAD(+). Glycine 296 provides a ligand contact to NADP(+).

This sequence belongs to the homoserine dehydrogenase family. In terms of assembly, homodimer. Requires a metal cation as cofactor.

It carries out the reaction L-homoserine + NAD(+) = L-aspartate 4-semialdehyde + NADH + H(+). The protein operates within amino-acid biosynthesis; L-methionine biosynthesis via de novo pathway; L-homoserine from L-aspartate: step 3/3. It functions in the pathway amino-acid biosynthesis; L-threonine biosynthesis; L-threonine from L-aspartate: step 3/5. Catalyzes the conversion of L-aspartate-beta-semialdehyde (L-Asa) to L-homoserine (L-Hse), the third step in the biosynthesis of threonine and methionine from aspartate. Utilizes NADH but not NADPH as coenzyme. In Pyrococcus horikoshii (strain ATCC 700860 / DSM 12428 / JCM 9974 / NBRC 100139 / OT-3), this protein is Homoserine dehydrogenase.